The following is a 395-amino-acid chain: Bifunctional enzyme IspD/IspF (395 aa).

Residues 1-237 are 2-C-methyl-D-erythritol 4-phosphate cytidylyltransferase; sequence MRTWVLLLAA…DANEPQVTVP (237 aa). Positions 238–395 are 2-C-methyl-D-erythritol 2,4-cyclodiphosphate synthase; that stretch reads CVGWGYDVHR…AAVTGLRPMP (158 aa). Residues Asp244 and His246 each coordinate a divalent metal cation. 4-CDP-2-C-methyl-D-erythritol 2-phosphate-binding positions include 244–246 and 270–271; these read DVH and HS. Residue His278 participates in a divalent metal cation binding. 4-CDP-2-C-methyl-D-erythritol 2-phosphate contacts are provided by residues 292–294, 297–301, 368–371, and Phe375; these read DIG, FPDSD, and TTEE.

In the N-terminal section; belongs to the IspD/TarI cytidylyltransferase family. IspD subfamily. The protein in the C-terminal section; belongs to the IspF family. The cofactor is a divalent metal cation.

It catalyses the reaction 2-C-methyl-D-erythritol 4-phosphate + CTP + H(+) = 4-CDP-2-C-methyl-D-erythritol + diphosphate. The catalysed reaction is 4-CDP-2-C-methyl-D-erythritol 2-phosphate = 2-C-methyl-D-erythritol 2,4-cyclic diphosphate + CMP. It functions in the pathway isoprenoid biosynthesis; isopentenyl diphosphate biosynthesis via DXP pathway; isopentenyl diphosphate from 1-deoxy-D-xylulose 5-phosphate: step 2/6. Its pathway is isoprenoid biosynthesis; isopentenyl diphosphate biosynthesis via DXP pathway; isopentenyl diphosphate from 1-deoxy-D-xylulose 5-phosphate: step 4/6. Bifunctional enzyme that catalyzes the formation of 4-diphosphocytidyl-2-C-methyl-D-erythritol from CTP and 2-C-methyl-D-erythritol 4-phosphate (MEP) (IspD), and catalyzes the conversion of 4-diphosphocytidyl-2-C-methyl-D-erythritol 2-phosphate (CDP-ME2P) to 2-C-methyl-D-erythritol 2,4-cyclodiphosphate (ME-CPP) with a corresponding release of cytidine 5-monophosphate (CMP) (IspF). This is Bifunctional enzyme IspD/IspF from Nitratidesulfovibrio vulgaris (strain ATCC 29579 / DSM 644 / CCUG 34227 / NCIMB 8303 / VKM B-1760 / Hildenborough) (Desulfovibrio vulgaris).